The following is a 270-amino-acid chain: Homeobox protein vent1B (270 aa).

Composition is skewed to basic and acidic residues over residues 17–26 and 44–59; these read EEAADGKDSM and YAKEMPRRKDGQDVQE. Disordered stretches follow at residues 17–66 and 88–134; these read EEAA…SFQC and TWGS…LRTA. A compositionally biased stretch (polar residues) spans 89 to 99; that stretch reads WGSSDEFSSAG. The segment covering 116-131 has biased composition (basic and acidic residues); sequence QDTDHNGKSTKSDRRL. The segment at residues 128–187 is a DNA-binding region (homeobox); sequence DRRLRTAFSPQQISKLEQAFNKQRYLGASERKKLATSLMLSEIQVKTWFQNRRMKLKRQI.

In terms of tissue distribution, expressed in the ventral marginal zone of gastrulae. At the end of gastrulation, predominantly localized to the ventral region of the closing slit blastopore. At early tail bud stage, expression is maintained only in the forming proctodeum.

Its subcellular location is the nucleus. Its function is as follows. Probable transcription regulator. Acts in a ventral signaling pathway downstream of bmp4 and vent2B. This is Homeobox protein vent1B (vent1B) from Xenopus laevis (African clawed frog).